Consider the following 433-residue polypeptide: Putative ankyrin repeat protein R784 (433 aa).

10 ANK repeats span residues 44–70 (NQNL…KTDV), 71–101 (NGLK…NNDL), 102–131 (LDLH…IVII), 179–205 (FYDS…NQCS), 206–235 (VRQK…RIFS), 237–264 (RRLI…IDLA), 265–294 (QNNF…DIHF), 296–321 (NGEC…NKVY), 322–351 (MSEK…ACMS), and 380–409 (NMRK…KLRE).

This chain is Putative ankyrin repeat protein R784, found in Acanthamoeba polyphaga mimivirus (APMV).